Consider the following 228-residue polypeptide: Sodium channel regulatory subunit beta-4 (228 aa).

An N-terminal signal peptide occupies residues 1–30; it reads MSRAGNRGNTQARWLGIGLLGLFLLPMYLS. The region spanning 31–148 is the Ig-like C2-type domain; sequence LEVSVGKATT…KDLNNSATIF (118 aa). At 31 to 161 the chain is on the extracellular side; sequence LEVSVGKATT…VDKLEEVDNT (131 aa). N45, N71, N113, and N142 each carry an N-linked (GlcNAc...) asparagine glycan. C53 and C131 are oxidised to a cystine. The chain crosses the membrane as a helical span at residues 162-182; that stretch reads VTLIILAVVGGVIGLLVCILL. At 183–228 the chain is on the cytoplasmic side; the sequence is LKKLITFILKKTREKKKECLVSSSGNDNTENGLPGSKAEEKPPTKV. A disordered region spans residues 199 to 228; that stretch reads KECLVSSSGNDNTENGLPGSKAEEKPPTKV. Positions 203–213 are enriched in polar residues; it reads VSSSGNDNTEN. Residues 219-228 show a composition bias toward basic and acidic residues; the sequence is KAEEKPPTKV.

The protein belongs to the sodium channel auxiliary subunit SCN4B (TC 8.A.17) family. A voltage-gated sodium (Nav) channel consists of an ion-conducting pore-forming alpha subunit functional on its own that is regulated by one or more beta subunits. The beta subunit SCN4B is disulfide-linked to the pore-forming alpha subunit. Interacts with SCN1A; regulatory subunit of SCN1A/Nav1.1. Interacts with SCN2A; regulatory subunit of SCN2A/Nav1.2. In terms of processing, contains an interchain disulfide bond with SCN2A. As to expression, expressed at a high level in dorsal root ganglia, at a lower level in brain, spinal cord, skeletal muscle and heart.

It is found in the cell membrane. Regulatory subunit of multiple voltage-gated sodium (Nav) channels directly mediating the depolarization of excitable membranes. Navs, also called VGSCs (voltage-gated sodium channels) or VDSCs (voltage-dependent sodium channels), operate by switching between closed and open conformations depending on the voltage difference across the membrane. In the open conformation they allow Na(+) ions to selectively pass through the pore, along their electrochemical gradient. The influx of Na+ ions provokes membrane depolarization, initiating the propagation of electrical signals throughout cells and tissues. The accessory beta subunits participate in localization and functional modulation of the Nav channels. Modulates the activity of SCN1A/Nav1.1. Modulates the activity of SCN2A/Nav1.2. This chain is Sodium channel regulatory subunit beta-4, found in Rattus norvegicus (Rat).